We begin with the raw amino-acid sequence, 175 residues long: NADH-quinone oxidoreductase subunit I 1 (175 aa).

2 4Fe-4S ferredoxin-type domains span residues 44-74 and 90-119; these read LNRW…VESA and RVYQ…MIND. Cysteine 54, cysteine 57, cysteine 60, cysteine 64, cysteine 99, cysteine 102, cysteine 105, and cysteine 109 together coordinate [4Fe-4S] cluster.

It belongs to the complex I 23 kDa subunit family. In terms of assembly, NDH-1 is composed of 14 different subunits. Subunits NuoA, H, J, K, L, M, N constitute the membrane sector of the complex. Requires [4Fe-4S] cluster as cofactor.

It localises to the cell membrane. It catalyses the reaction a quinone + NADH + 5 H(+)(in) = a quinol + NAD(+) + 4 H(+)(out). NDH-1 shuttles electrons from NADH, via FMN and iron-sulfur (Fe-S) centers, to quinones in the respiratory chain. The immediate electron acceptor for the enzyme in this species is believed to be menaquinone. Couples the redox reaction to proton translocation (for every two electrons transferred, four hydrogen ions are translocated across the cytoplasmic membrane), and thus conserves the redox energy in a proton gradient. In Mycolicibacterium paratuberculosis (strain ATCC BAA-968 / K-10) (Mycobacterium paratuberculosis), this protein is NADH-quinone oxidoreductase subunit I 1.